The chain runs to 538 residues: Importin subunit alpha-4 (538 aa).

In terms of domain architecture, IBB spans 1-58; that stretch reads MSLRPSTRAELRKKIYKTGVDADEARRRREDNLVEIRKNKREDSLLKKRREGMMLQQQ. ARM repeat units follow at residues 112 to 152, 155 to 194, 197 to 237, 239 to 278, 281 to 320, 323 to 363, 366 to 405, and 409 to 448; these read SPPI…NVAS, SDHT…NVAG, PNCR…NFCR, KPPT…YLSD, NDKI…NIVT, DSQT…NITA, KLQI…NATS, and HEQI…NILK.

Belongs to the importin alpha family. In terms of assembly, forms a complex with importin subunit beta-1. Interacts with A.tumefaciens VirD2 and VirE2.

The protein resides in the nucleus envelope. In terms of biological role, binds to conventional NLS motifs and mediates nuclear protein import across the nuclear envelope. Acts as a cellular receptor for the nuclear import of the virD2 protein of Agrobacterium and is essential for Agrobacterium-mediated root transformation. The sequence is that of Importin subunit alpha-4 from Arabidopsis thaliana (Mouse-ear cress).